Here is a 140-residue protein sequence, read N- to C-terminus: Relaxin-3 (140 aa).

Residues 1 to 23 form the signal peptide; the sequence is MATRGLLLASWALLGALVLQAEA. Cystine bridges form between Cys-33–Cys-127, Cys-45–Cys-140, and Cys-126–Cys-131. A propeptide spans 53 to 116 (connecting peptide); sequence ADILAHDPLG…GSPGVVRGSR (64 aa).

Belongs to the insulin family. Heterodimer of a B chain and an A chain linked by two disulfide bonds. Highly abundant expression is detected in neurons within the ventomedial dorsal tegmental nucleus and the laterally central gray alpha of the pons. Also detected at much lower levels within the hippocampus.

The protein resides in the secreted. Functionally, may play a role in neuropeptide signaling processes. Ligand for LGR7, relaxin-3 receptor-1 and relaxin-3 receptor-2. The sequence is that of Relaxin-3 (Rln3) from Rattus norvegicus (Rat).